The chain runs to 264 residues: MKPTTIASLQKCKQEKKRFATITAYDYSFAKLFAEEGLNVMLVGDSLGMTVQGHESTLPVTVEDIAYHTTAVRRGAPNCLLLADLPFMAYATPEQAFENAATVMRAGANMVKIEGGEWLVETVKMLTERAVPVCGHLGLTPQSVNIFGGYKVQGRGDEASDRLLSDALALEAAGAQLLVLECVPVELAKRITEALAIPVIGIGAGNVTDGQILVMHDAFGITGGHIPKFAKNFLAETGDIRAAVRQYMAEVESGVYPGEEHSFH.

Positions 45 and 84 each coordinate Mg(2+). 3-methyl-2-oxobutanoate contacts are provided by residues 45-46 (DS), aspartate 84, and lysine 112. Residue glutamate 114 coordinates Mg(2+). Glutamate 181 acts as the Proton acceptor in catalysis.

Belongs to the PanB family. Homodecamer; pentamer of dimers. Mg(2+) is required as a cofactor.

The protein localises to the cytoplasm. It carries out the reaction 3-methyl-2-oxobutanoate + (6R)-5,10-methylene-5,6,7,8-tetrahydrofolate + H2O = 2-dehydropantoate + (6S)-5,6,7,8-tetrahydrofolate. The protein operates within cofactor biosynthesis; (R)-pantothenate biosynthesis; (R)-pantoate from 3-methyl-2-oxobutanoate: step 1/2. In terms of biological role, catalyzes the reversible reaction in which hydroxymethyl group from 5,10-methylenetetrahydrofolate is transferred onto alpha-ketoisovalerate to form ketopantoate. The sequence is that of 3-methyl-2-oxobutanoate hydroxymethyltransferase from Escherichia coli O157:H7.